The following is a 612-amino-acid chain: Threonine--tRNA ligase (612 aa).

The catalytic stretch occupies residues 218-509 (DHRKLGVELG…LSEHFWGNFP (292 aa)). 3 residues coordinate Zn(2+): C310, H361, and H486.

The protein belongs to the class-II aminoacyl-tRNA synthetase family. Homodimer. It depends on Zn(2+) as a cofactor.

The protein localises to the cytoplasm. The enzyme catalyses tRNA(Thr) + L-threonine + ATP = L-threonyl-tRNA(Thr) + AMP + diphosphate + H(+). Its function is as follows. Catalyzes the attachment of threonine to tRNA(Thr) in a two-step reaction: L-threonine is first activated by ATP to form Thr-AMP and then transferred to the acceptor end of tRNA(Thr). Also edits incorrectly charged L-seryl-tRNA(Thr). This Helicobacter acinonychis (strain Sheeba) protein is Threonine--tRNA ligase.